Consider the following 349-residue polypeptide: tRNA (guanine(26)-N(2))-dimethyltransferase (349 aa).

Positions 1 to 343 (MEVEEGRARV…ADRDVVVKIL (343 aa)) constitute a Trm1 methyltransferase domain. S-adenosyl-L-methionine-binding residues include R25, R50, D66, D92, and A93.

Belongs to the class I-like SAM-binding methyltransferase superfamily. Trm1 family.

The enzyme catalyses guanosine(26) in tRNA + 2 S-adenosyl-L-methionine = N(2)-dimethylguanosine(26) in tRNA + 2 S-adenosyl-L-homocysteine + 2 H(+). Dimethylates a single guanine residue at position 26 of a number of tRNAs using S-adenosyl-L-methionine as donor of the methyl groups. In Archaeoglobus fulgidus (strain ATCC 49558 / DSM 4304 / JCM 9628 / NBRC 100126 / VC-16), this protein is tRNA (guanine(26)-N(2))-dimethyltransferase.